Consider the following 246-residue polypeptide: Ubiquinone biosynthesis O-methyltransferase (246 aa).

S-adenosyl-L-methionine is bound by residues Arg-44, Gly-63, Asp-84, and Met-128.

This sequence belongs to the methyltransferase superfamily. UbiG/COQ3 family.

The catalysed reaction is a 3-demethylubiquinol + S-adenosyl-L-methionine = a ubiquinol + S-adenosyl-L-homocysteine + H(+). The enzyme catalyses a 3-(all-trans-polyprenyl)benzene-1,2-diol + S-adenosyl-L-methionine = a 2-methoxy-6-(all-trans-polyprenyl)phenol + S-adenosyl-L-homocysteine + H(+). It functions in the pathway cofactor biosynthesis; ubiquinone biosynthesis. Its function is as follows. O-methyltransferase that catalyzes the 2 O-methylation steps in the ubiquinone biosynthetic pathway. The sequence is that of Ubiquinone biosynthesis O-methyltransferase from Xylella fastidiosa (strain 9a5c).